An 873-amino-acid polypeptide reads, in one-letter code: Potassium voltage-gated channel subfamily KQT member 3 (873 aa).

The interval 1–41 is disordered; the sequence is MGLKARRAAGAAGGGGGEGGGGGGGAANPAGGDSAVAGDEE. The Cytoplasmic segment spans residues 1–121; the sequence is MGLKARRAAG…IYDALERPRG (121 aa). The segment covering 11–26 has biased composition (gly residues); that stretch reads AAGGGGGEGGGGGGGA. Position 82 is a phosphothreonine (Thr-82). A helical membrane pass occupies residues 122-144; sequence WALLYHALVFLIVLGCLILAVLT. The Extracellular segment spans residues 145-154; the sequence is TFKEYETVSG. Residues 155–176 traverse the membrane as a helical segment; sequence DWLLLLETFAIFIFGAEFALRI. Topologically, residues 177–194 are cytoplasmic; that stretch reads WAAGCCCRYKGWRGRLKF. A helical transmembrane segment spans residues 195-214; that stretch reads ARKPLCMLDIFVLIASVPVV. Topologically, residues 215–226 are extracellular; sequence AVGNQGNVLATS. Residues 227–245 form a helical; Voltage-sensor membrane-spanning segment; that stretch reads LRSLRFLQILRMLRMDRRG. Position 244 (Arg-244) interacts with a 1,2-diacyl-sn-glycero-3-phospho-(1D-myo-inositol-4,5-bisphosphate). The Cytoplasmic segment spans residues 246-257; it reads GTWKLLGSAICA. The helical transmembrane segment at 258-283 threads the bilayer; it reads HSKELITAWYIGFLTLILSSFLVYLV. Lys-260 is a binding site for a 1,2-diacyl-sn-glycero-3-phospho-(1D-myo-inositol-4,5-bisphosphate). At 284–303 the chain is on the extracellular side; sequence EKDVPEMDAQGEEMKEEFET. The pore-forming intramembrane region spans 304 to 316; sequence YADALWWGLITLA. The Selectivity filter signature appears at 317 to 322; the sequence is TIGYGD. Topologically, residues 317–327 are extracellular; the sequence is TIGYGDKTPKT. Residues 328 to 354 traverse the membrane as a helical segment; sequence WEGRLIAATFSLIGVSFFALPAGILGS. Residues 355–873 are Cytoplasmic-facing; that stretch reads GLALKVQEQH…SIWTPSNKPT (519 aa). A mediates interaction with calmodulin region spans residues 357 to 538; that stretch reads ALKVQEQHRQ…RLYKKKFKET (182 aa). Position 367 (Lys-367) interacts with a 1,2-diacyl-sn-glycero-3-phospho-(1D-myo-inositol-4,5-bisphosphate). 3 disordered regions span residues 575–603, 723–742, and 766–873; these read PGPP…PRNE, RGGP…GSTY, and ELQG…NKPT. Polar residues-rich tracts occupy residues 588-601, 725-741, and 844-873; these read KGSA…QSPR, GPSS…SGST, and DPFT…NKPT.

Belongs to the potassium channel family. KQT (TC 1.A.1.15) subfamily. Kv7.3/KCNQ3 sub-subfamily. Heterotetramer with KCNQ2; forms heterotetrameric M-channel responsible for the native M-current. Interacts with calmodulin; the interaction is calcium-independent, constitutive and participates in the proper assembly of a functional M-channel. Heteromultimer with KCNQ5. May associate with KCNE2. Interacts with IQCJ-SCHIP1. Interacts (via the pore module) with SLC5A3/SMIT1; forms a coregulatory complex that alters ion selectivity, voltage dependence and gating kinetics of the channel. In terms of processing, KCNQ2/KCNQ3 are ubiquitinated by NEDD4L. Ubiquitination leads to protein degradation. Degradation induced by NEDD4L is inhibited by USP36. Expressed in brain and sympathetic ganglia. In brain, expressed in cortex, hippocampus and at much lower levels in cerebellum. In sympathetic ganglia, expressed at approximately equal levels in both superior cervical ganglia and prevertebral ganglia.

It localises to the cell membrane. The enzyme catalyses K(+)(in) = K(+)(out). It catalyses the reaction Rb(+)(in) = Rb(+)(out). It carries out the reaction Cs(+)(in) = Cs(+)(out). The catalysed reaction is Na(+)(in) = Na(+)(out). Phosphatidylinositol-4,5-bisphosphate (PIP2) potentiates the activation of KCNQ channels by enhancing the electro-mechanical coupling of the voltage-sensing domain (VSD) and the pore-forming domain (PD). In the closed state of the channel, PIP2 is anchored at the S2-S3 loop; upon channel activation, PIP2 interacts with the S4-S5 linker and is involved in channel gating. Calcium suppresses KCNQ2-KCNQ3 channel currents, with calcium-bound calmodulin inducing a change in channel configuration which leads to the reduction of channel affinity for PIP2 and subsequent current suppression. M-channel is blocked by XE991. Pore-forming subunit of the voltage-gated potassium (Kv) M-channel which is responsible for the M-current, a key controller of neuronal excitability. M-channel is composed of pore-forming subunits KCNQ2 and KCNQ3 assembled as heterotetramers, each subunit containing a voltage sensing domain (VSD) and a pore-forming domain (PD). The native M-current has a slowly activating and deactivating potassium conductance which plays a critical role in determining the subthreshold electrical excitability of neurons as well as the responsiveness to synaptic inputs. M-channel is selectively permeable in vitro to other cations besides potassium, in decreasing order of affinity K(+) &gt; Rb(+) &gt; Cs(+) &gt; Na(+). M-channel association with SLC5A3/SMIT1 alters channel ion selectivity, increasing Na(+) and Cs(+) permeation relative to K(+). Suppressed by activation of M1 muscarinic acetylcholine receptors. KCNQ3 also associates with KCNQ5 to form a functional channel in vitro and may also contribute to the M-current in brain. The chain is Potassium voltage-gated channel subfamily KQT member 3 from Rattus norvegicus (Rat).